The sequence spans 276 residues: Tryptase beta-2 (276 aa).

The first 21 residues, 1 to 21, serve as a signal peptide directing secretion; it reads MLKRRLLLLWALSLLASLVYS. A propeptide spans 22 to 31 (activation peptide); the sequence is APRPANQRVG. Positions 32 to 273 constitute a Peptidase S1 domain; that stretch reads IVGGHEASES…YLDWIHRYVP (242 aa). Residues Cys60 and Cys76 are joined by a disulfide bond. The active-site Charge relay system is the His75. A Phosphotyrosine modification is found at Tyr98. Asp122 serves as the catalytic Charge relay system. N-linked (GlcNAc...) asparagine glycosylation occurs at Asn133. 3 cysteine pairs are disulfide-bonded: Cys156–Cys231, Cys189–Cys212, and Cys221–Cys249. Ser225 serves as the catalytic Charge relay system.

It belongs to the peptidase S1 family. Tryptase subfamily. As to quaternary structure, homotetramer. The active tetramer is converted to inactive monomers at neutral and acidic pH in the absence of heparin. Low concentrations of inactive monomers become active monomers at pH 6.0 in the presence of heparin. When the concentration of active monomers is higher, they convert to active monomers and then to active tetramers. These monomers are active and functionally distinct from the tetrameric enzyme. In contrast to the hidden active sites in the tetrameric form, the active site of the monomeric form is accessible for macromolecular proteins and inhibitors, e.g. fibrinogen which is a substrate for the monomeric but not for the tetrameric form. The monomeric form forms a complex with SERPINB6. As to expression, during embryogenesis, detected primarily in skin.

It localises to the secreted. It carries out the reaction Preferential cleavage: Arg-|-Xaa, Lys-|-Xaa, but with more restricted specificity than trypsin.. In terms of biological role, tryptase is the major neutral protease present in mast cells and is secreted upon the coupled activation-degranulation response of this cell type. Plays a role in innate immunity. This chain is Tryptase beta-2 (Tpsb2), found in Mus musculus (Mouse).